Consider the following 150-residue polypeptide: Probable histone H2A.5 (150 aa).

The span at 1–12 (MESSQATTKPTR) shows a compositional bias: low complexity. Disordered stretches follow at residues 1–28 (MESS…SVSK) and 130–150 (KSTA…PKKA). Polar residues predominate over residues 131 to 150 (STASSSQAEKASATKSPKKA). Ser146 carries the post-translational modification Phosphoserine. Residues 146–149 (SPKK) carry the SPKK motif motif.

The protein belongs to the histone H2A family. As to quaternary structure, the nucleosome is a histone octamer containing two molecules each of H2A, H2B, H3 and H4 assembled in one H3-H4 heterotetramer and two H2A-H2B heterodimers. The octamer wraps approximately 147 bp of DNA. In terms of processing, not ubiquitinated.

It localises to the nucleus. The protein localises to the chromosome. Core component of nucleosome. Nucleosomes wrap and compact DNA into chromatin, limiting DNA accessibility to the cellular machineries which require DNA as a template. Histones thereby play a central role in transcription regulation, DNA repair, DNA replication and chromosomal stability. DNA accessibility is regulated via a complex set of post-translational modifications of histones, also called histone code, and nucleosome remodeling. This Arabidopsis thaliana (Mouse-ear cress) protein is Probable histone H2A.5.